A 209-amino-acid polypeptide reads, in one-letter code: Protein-L-isoaspartate O-methyltransferase (209 aa).

Ser59 is an active-site residue.

The protein belongs to the methyltransferase superfamily. L-isoaspartyl/D-aspartyl protein methyltransferase family.

The protein localises to the cytoplasm. It catalyses the reaction [protein]-L-isoaspartate + S-adenosyl-L-methionine = [protein]-L-isoaspartate alpha-methyl ester + S-adenosyl-L-homocysteine. Catalyzes the methyl esterification of L-isoaspartyl residues in peptides and proteins that result from spontaneous decomposition of normal L-aspartyl and L-asparaginyl residues. It plays a role in the repair and/or degradation of damaged proteins. The polypeptide is Protein-L-isoaspartate O-methyltransferase (Helicobacter pylori (strain G27)).